A 448-amino-acid polypeptide reads, in one-letter code: Signal recognition particle 54 kDa protein (448 aa).

GTP-binding positions include 107–114, 189–193, and 247–250; these read GIQGSGKT, DTAGR, and TKLD.

It belongs to the GTP-binding SRP family. SRP54 subfamily. Part of the signal recognition particle protein translocation system, which is composed of SRP and FtsY. Archaeal SRP consists of a 7S RNA molecule of 300 nucleotides and two protein subunits: SRP54 and SRP19.

Its subcellular location is the cytoplasm. It carries out the reaction GTP + H2O = GDP + phosphate + H(+). In terms of biological role, involved in targeting and insertion of nascent membrane proteins into the cytoplasmic membrane. Binds to the hydrophobic signal sequence of the ribosome-nascent chain (RNC) as it emerges from the ribosomes. The SRP-RNC complex is then targeted to the cytoplasmic membrane where it interacts with the SRP receptor FtsY. This Thermococcus gammatolerans (strain DSM 15229 / JCM 11827 / EJ3) protein is Signal recognition particle 54 kDa protein.